Here is a 113-residue protein sequence, read N- to C-terminus: Large ribosomal subunit protein eL31 (113 aa).

Belongs to the eukaryotic ribosomal protein eL31 family.

The protein is Large ribosomal subunit protein eL31 (RPL31) of Candida glabrata (strain ATCC 2001 / BCRC 20586 / JCM 3761 / NBRC 0622 / NRRL Y-65 / CBS 138) (Yeast).